The primary structure comprises 849 residues: uncharacterized protein (849 aa).

Helical transmembrane passes span 587 to 607 and 620 to 640; these read VALGEALAAVTLAVGDFLGLF and AGILTLLAAFESIYSFITGDW.

It is found in the cell membrane. This is an uncharacterized protein from Methanocaldococcus jannaschii (strain ATCC 43067 / DSM 2661 / JAL-1 / JCM 10045 / NBRC 100440) (Methanococcus jannaschii).